We begin with the raw amino-acid sequence, 194 residues long: Putative lipoprotein LppK (194 aa).

The signal sequence occupies residues 1–26 (MSRWTHRTFFIALSAIVTTAGFGSSG). Residue Cys-27 is the site of N-palmitoyl cysteine attachment. A lipid anchor (S-diacylglycerol cysteine) is attached at Cys-27. Residues 174–194 (GNSSGLTNPAPIKAPTPTPSH) form a disordered region. A compositionally biased stretch (pro residues) spans 185–194 (IKAPTPTPSH).

This sequence belongs to the MTB12 family.

The protein localises to the cell membrane. The protein is Putative lipoprotein LppK (lppK) of Mycobacterium leprae (strain TN).